Consider the following 185-residue polypeptide: Ribosome-recycling factor (185 aa).

Belongs to the RRF family.

It localises to the cytoplasm. Functionally, responsible for the release of ribosomes from messenger RNA at the termination of protein biosynthesis. May increase the efficiency of translation by recycling ribosomes from one round of translation to another. The polypeptide is Ribosome-recycling factor (Geobacter sulfurreducens (strain ATCC 51573 / DSM 12127 / PCA)).